A 308-amino-acid polypeptide reads, in one-letter code: tRNA dimethylallyltransferase (308 aa).

Residue 14 to 21 (GPTASGKS) coordinates ATP. Residue 16-21 (TASGKS) participates in substrate binding. The interaction with substrate tRNA stretch occupies residues 39 to 42 (DSMQ).

Belongs to the IPP transferase family. As to quaternary structure, monomer. Mg(2+) serves as cofactor.

It catalyses the reaction adenosine(37) in tRNA + dimethylallyl diphosphate = N(6)-dimethylallyladenosine(37) in tRNA + diphosphate. In terms of biological role, catalyzes the transfer of a dimethylallyl group onto the adenine at position 37 in tRNAs that read codons beginning with uridine, leading to the formation of N6-(dimethylallyl)adenosine (i(6)A). The chain is tRNA dimethylallyltransferase from Bradyrhizobium sp. (strain ORS 278).